The primary structure comprises 155 residues: Ribonuclease H (155 aa).

In terms of domain architecture, RNase H type-1 spans 1–142; the sequence is MLKQVEIFTD…CDELARAAAM (142 aa). Residues aspartate 10, glutamate 48, aspartate 70, and aspartate 134 each contribute to the Mg(2+) site.

This sequence belongs to the RNase H family. As to quaternary structure, monomer. Requires Mg(2+) as cofactor.

It is found in the cytoplasm. It catalyses the reaction Endonucleolytic cleavage to 5'-phosphomonoester.. Its function is as follows. Endonuclease that specifically degrades the RNA of RNA-DNA hybrids. This Salmonella paratyphi C (strain RKS4594) protein is Ribonuclease H.